The sequence spans 322 residues: MDSIHGHYHIQLSNYSAGENLQSATLTEGVIGAHRVKVETALSHSNRQKKLSATIKHNQSSRSMLDRKLTSDGKANQRSSFTFSMIMYRMIHFVLSTRVPAVRESVANYGGNINFKFAQTKGAFLHQIIKHSDTASGVCEALCAHWIWSHAQGQSLFDQLYVGGRKGKFQIDTLYSIKQLQIDGCKADVDQDEVTLDWFKKKGISERMIERHCLLRPVDVTGTTESEGPDQLLNAILDTHGIGYGYKKIYLSGQMSAHAIAAYVNEKSGVTFFDPNFGEFHFSDKEKFRKWFTNSFWENSMYHYPLGVGQRFSVLTFDSKEV.

The segment at 43 to 72 (SHSNRQKKLSATIKHNQSSRSMLDRKLTSD) is disordered. Residues Cys139, His258, and Asp274 contribute to the active site.

Belongs to the peptidase C58 family. In terms of assembly, interacts with human ARHA.

Its subcellular location is the secreted. In terms of biological role, cysteine protease, which is translocated into infected cells and plays a central role in pathogenesis by cleaving the C-terminus end of the human small GTPase RhoA/ARHA, a regulator of cytoskeleton. Once cleaved, ARHA loses its lipid modification, and is released from the cell membrane, leading to the subsequent disruption of actin cytoskeleton of the host cell. The protein is Cysteine protease YopT (yopT) of Yersinia enterocolitica.